The chain runs to 150 residues: D-aminoacyl-tRNA deacylase (150 aa).

Positions 137–138 (GP) match the Gly-cisPro motif, important for rejection of L-amino acids motif.

It belongs to the DTD family. Homodimer.

The protein localises to the cytoplasm. The catalysed reaction is glycyl-tRNA(Ala) + H2O = tRNA(Ala) + glycine + H(+). It catalyses the reaction a D-aminoacyl-tRNA + H2O = a tRNA + a D-alpha-amino acid + H(+). Functionally, an aminoacyl-tRNA editing enzyme that deacylates mischarged D-aminoacyl-tRNAs. Also deacylates mischarged glycyl-tRNA(Ala), protecting cells against glycine mischarging by AlaRS. Acts via tRNA-based rather than protein-based catalysis; rejects L-amino acids rather than detecting D-amino acids in the active site. By recycling D-aminoacyl-tRNA to D-amino acids and free tRNA molecules, this enzyme counteracts the toxicity associated with the formation of D-aminoacyl-tRNA entities in vivo and helps enforce protein L-homochirality. This Alkalilimnicola ehrlichii (strain ATCC BAA-1101 / DSM 17681 / MLHE-1) protein is D-aminoacyl-tRNA deacylase.